The sequence spans 273 residues: Serine acetyltransferase (273 aa).

Belongs to the transferase hexapeptide repeat family. Homohexamer. Dimer of a homotrimer.

It localises to the cytoplasm. It carries out the reaction L-serine + acetyl-CoA = O-acetyl-L-serine + CoA. It functions in the pathway amino-acid biosynthesis; L-cysteine biosynthesis; L-cysteine from L-serine: step 1/2. The polypeptide is Serine acetyltransferase (cysE) (Shigella flexneri).